Consider the following 156-residue polypeptide: Eosinophil cationic-type ribonuclease 3 (156 aa).

An N-terminal signal peptide occupies residues 1 to 25 (MGPKLLESRLCLLLLLRLVLMLASC). Residue H38 is the Proton acceptor of the active site. N-linked (GlcNAc...) asparagine glycosylation occurs at N41. Intrachain disulfides connect C47/C106, C61/C119, C79/C134, and C86/C94. 62–66 (KGLNT) is a substrate binding site. N89, N96, and N107 each carry an N-linked (GlcNAc...) asparagine glycan. H151 (proton donor) is an active-site residue.

Belongs to the pancreatic ribonuclease family.

The polypeptide is Eosinophil cationic-type ribonuclease 3 (Ear3) (Mus musculus (Mouse)).